The chain runs to 335 residues: DNA polymerase beta (335 aa).

K41 is covalently cross-linked (Glycyl lysine isopeptide (Lys-Gly) (interchain with G-Cter in ubiquitin)). K60 is a binding site for K(+). Position 60 (K60) interacts with Na(+). A Glycyl lysine isopeptide (Lys-Gly) (interchain with G-Cter in ubiquitin) cross-link involves residue K61. K(+) contacts are provided by L62 and V65. 2 residues coordinate Na(+): L62 and V65. The active-site Nucleophile; Schiff-base intermediate with DNA; for 5'-dRP lyase activity is K72. Residue K72 is modified to N6-acetyllysine. K81 participates in a covalent cross-link: Glycyl lysine isopeptide (Lys-Gly) (interchain with G-Cter in ubiquitin). An Omega-N-methylarginine; by PRMT6 modification is found at R83. T101, V103, and I106 together coordinate K(+). The Na(+) site is built by T101, V103, and I106. R149 is an a 2'-deoxyribonucleoside 5'-triphosphate binding site. The residue at position 152 (R152) is an Omega-N-methylarginine; by PRMT6. Residues S180, R183, G189, and D190 each coordinate a 2'-deoxyribonucleoside 5'-triphosphate. The segment at 183–192 (RGAESSGDMD) is DNA-binding. Mg(2+) is bound by residues D190, D192, and D256.

It belongs to the DNA polymerase type-X family. In terms of assembly, monomer. Binds single-stranded DNA (ssDNA). Interacts with APEX1, LIG1, LIG3, FEN1, PCNA and XRCC1. Interacts with HUWE1/ARF-BP1, STUB1/CHIP and USP47. Interacts with FAM168A. Mg(2+) serves as cofactor. Methylation by PRMT6 stimulates the polymerase activity by enhancing DNA binding and processivity. In terms of processing, ubiquitinated at Lys-41, Lys-61 and Lys-81: monoubiquitinated by HUWE1/ARF-BP1. Monoubiquitinated protein is then the target of STUB1/CHIP, which catalyzes polyubiquitination from monoubiquitin, leading to degradation by the proteasome. USP47 mediates the deubiquitination of monoubiquitinated protein, preventing polyubiquitination by STUB1/CHIP and its subsequent degradation.

Its subcellular location is the nucleus. It is found in the cytoplasm. It carries out the reaction DNA(n) + a 2'-deoxyribonucleoside 5'-triphosphate = DNA(n+1) + diphosphate. The catalysed reaction is a 5'-end 2'-deoxyribose-2'-deoxyribonucleotide-DNA = (2E,4S)-4-hydroxypenten-2-al-5-phosphate + a 5'-end 5'-phospho-2'-deoxyribonucleoside-DNA + H(+). The enzyme catalyses 2'-deoxyribonucleotide-(2'-deoxyribose 5'-phosphate)-2'-deoxyribonucleotide-DNA = a 3'-end 2'-deoxyribonucleotide-(2,3-dehydro-2,3-deoxyribose 5'-phosphate)-DNA + a 5'-end 5'-phospho-2'-deoxyribonucleoside-DNA + H(+). Functionally, repair polymerase that plays a key role in base-excision repair. During this process, the damaged base is excised by specific DNA glycosylases, the DNA backbone is nicked at the abasic site by an apurinic/apyrimidic (AP) endonuclease, and POLB removes 5'-deoxyribose-phosphate from the preincised AP site acting as a 5'-deoxyribose-phosphate lyase (5'-dRP lyase); through its DNA polymerase activity, it adds one nucleotide to the 3' end of the arising single-nucleotide gap. Conducts 'gap-filling' DNA synthesis in a stepwise distributive fashion rather than in a processive fashion as for other DNA polymerases. It is also able to cleave sugar-phosphate bonds 3' to an intact AP site, acting as an AP lyase. This chain is DNA polymerase beta (Polb), found in Mus musculus (Mouse).